A 113-amino-acid chain; its full sequence is Large ribosomal subunit protein bL19m (113 aa).

Belongs to the bacterial ribosomal protein bL19 family.

The protein resides in the mitochondrion. The protein is Large ribosomal subunit protein bL19m (RPL19) of Reclinomonas americana.